The following is a 227-amino-acid chain: tRNA (guanine-N(1)-)-methyltransferase (227 aa).

S-adenosyl-L-methionine contacts are provided by residues Gly-107 and Leu-127–Leu-132.

This sequence belongs to the RNA methyltransferase TrmD family. As to quaternary structure, homodimer.

Its subcellular location is the cytoplasm. It catalyses the reaction guanosine(37) in tRNA + S-adenosyl-L-methionine = N(1)-methylguanosine(37) in tRNA + S-adenosyl-L-homocysteine + H(+). Its function is as follows. Specifically methylates guanosine-37 in various tRNAs. The protein is tRNA (guanine-N(1)-)-methyltransferase of Mesomycoplasma hyopneumoniae (strain 232) (Mycoplasma hyopneumoniae).